The following is a 116-amino-acid chain: Putative iron-sulfur cluster insertion protein ErpA (116 aa).

3 residues coordinate iron-sulfur cluster: C44, C108, and C110.

Belongs to the HesB/IscA family. Homodimer. Iron-sulfur cluster serves as cofactor.

Functionally, required for insertion of 4Fe-4S clusters. This Herminiimonas arsenicoxydans protein is Putative iron-sulfur cluster insertion protein ErpA.